Reading from the N-terminus, the 277-residue chain is Urease accessory protein UreD (277 aa).

It belongs to the UreD family. In terms of assembly, ureD, UreF and UreG form a complex that acts as a GTP-hydrolysis-dependent molecular chaperone, activating the urease apoprotein by helping to assemble the nickel containing metallocenter of UreC. The UreE protein probably delivers the nickel.

It is found in the cytoplasm. Its function is as follows. Required for maturation of urease via the functional incorporation of the urease nickel metallocenter. This is Urease accessory protein UreD from Pseudomonas entomophila (strain L48).